Here is a 166-residue protein sequence, read N- to C-terminus: Putative transcriptional regulatory protein for hcr operon (166 aa).

The HTH marR-type domain maps to 1 to 155 (MRKHRGKPAN…LIGLLKRLYR (155 aa)).

May be involved in the regulation of genes for 4-hydroxybenzoyl-CoA reductase. This is Putative transcriptional regulatory protein for hcr operon from Thauera aromatica.